Here is an 89-residue protein sequence, read N- to C-terminus: Terminase, small subunit gp18 (89 aa).

The interval 1–48 (MEKDKSLITFLEMLDTAMAQRMLADLSDHERRSPQLYNAINKLLDRHK) is helix-turn-helix (HTH).

Belongs to the terminase small subunit family. Homooctamer. Interacts with the terminase large subunit gp19; the active complex is probably heterooligomeric.

Functionally, plays a role in packaging a single copy of genome into the prohead. The terminase is composed of two subunits (a large and a small) and the small subunit recognizes a specific sequence in the viral DNA. Once the DNA is packaged, the terminase detaches from the connector and the tail replaces it to finish maturation of the virion. Packaging initiates by TerS recognizing the packaging sequence in the viral DNA. The nuclease activity of TerL cuts the viral DNA and the terminase-DNA complex binds to the portal of a procapsid shell. DNA is translocated into the capsid, powered by the packaging ATPase in TerL, which continues until the next site is encountered at which point the motor stops and again cuts the DNA to release the nucleocapsid filled with a unit-length genome ('unit length' packaging). Direct short terminal repeats at each end of the genome are duplicated in concert with packaging. The protein is Terminase, small subunit gp18 of Escherichia coli (Bacteriophage T7).